Reading from the N-terminus, the 536-residue chain is Uridine 5'-monophosphate transferase (536 aa).

A disordered region spans residues 22-84 (ADHPTHTPED…GLQQCSSSPS (63 aa)). Polar residues predominate over residues 31–45 (DSPQTVPSPRSSSAH). Basic and acidic residues predominate over residues 48–60 (EIQELRSLQETRP). The segment covering 66 to 84 (RSQSRSSKHGLQQCSSSPS) has biased composition (polar residues). LRR repeat units follow at residues 140 to 164 (AGQA…LHRL), 165 to 189 (AHLR…SLCK), 191 to 211 (LERI…IGAL), 212 to 234 (KNLS…IGQC), 236 to 257 (SLTT…LANL), and 258 to 282 (TQLK…NLDD). One can recognise a Fido domain in the interval 377 to 533 (ITLDRIFKLN…LEGIATVMNQ (157 aa)).

It in the C-terminal section; belongs to the fic family. In terms of assembly, interacts with several members of the Arabidopsis RLCK VIIa subfamily.

The protein localises to the secreted. It localises to the host cell. It is found in the host cell membrane. It catalyses the reaction L-seryl-[protein] + UTP = O-(5'-uridylyl)-L-seryl-[protein] + diphosphate. It carries out the reaction L-threonyl-[protein] + UTP = uridylyl-L-threonyl-[protein] + diphosphate. In terms of biological role, functions both as a virulence and an avirulence gene in Arabidopsis. Causes disease on the Kashmir (Kas) ecotype, but not on Columbia (Col-0) ecotype. Acts by directly uridylylating the conserved phosphorylation sites in the activation loop of a number of host receptor-like cytoplasmic protein kinases (RLCK), including BIK1, RIPK, PBL1 and PBL2, preventing the activation of these kinases and subsequent signal transduction. In susceptible Arabidopsis plants, uridylylation of BIK1 inhibits the PAMP-triggered immunity (PTI) signaling cascade and thereby promotes bacterial virulence. It also inhibits RPM1-dependent effector-triggered immunity (ETI) in mesophyll tissues by targeting RIPK. In contrast, in the resistant ecotype Col-0, xopAC is a major avirulence gene. Uridylylation of PBL2 triggers the PBL2-RKS1 interaction and thus the assembly of the PBL2-RKS1-ZAR1 complex, which, in turn, activates effector-triggered immunity (ETI) against X.campestris. This Xanthomonas campestris pv. campestris (strain 8004) protein is Uridine 5'-monophosphate transferase.